The chain runs to 495 residues: Probable cytosol aminopeptidase (495 aa).

Mn(2+) is bound by residues lysine 266 and aspartate 271. Lysine 278 is a catalytic residue. Mn(2+) contacts are provided by aspartate 289, aspartate 348, and glutamate 350. Arginine 352 is an active-site residue.

This sequence belongs to the peptidase M17 family. Mn(2+) is required as a cofactor.

The protein localises to the cytoplasm. The enzyme catalyses Release of an N-terminal amino acid, Xaa-|-Yaa-, in which Xaa is preferably Leu, but may be other amino acids including Pro although not Arg or Lys, and Yaa may be Pro. Amino acid amides and methyl esters are also readily hydrolyzed, but rates on arylamides are exceedingly low.. It catalyses the reaction Release of an N-terminal amino acid, preferentially leucine, but not glutamic or aspartic acids.. In terms of biological role, presumably involved in the processing and regular turnover of intracellular proteins. Catalyzes the removal of unsubstituted N-terminal amino acids from various peptides. The protein is Probable cytosol aminopeptidase of Pseudomonas aeruginosa (strain LESB58).